The sequence spans 97 residues: Sugar transporter SemiSWEET (97 aa).

The PQ-loop domain maps to 4-70 (IERIGKALEP…IYGIYHKNPT (67 aa)). Helical transmembrane passes span 15–35 (MLVMGLISPLATMPQLYKLYV), 44–65 (LSLTTWLLYSFIALLWTIYGIY), and 71–91 (IWVGNCLGFLMYVAMVVGIIA).

Homodimer.

The protein localises to the cell membrane. In terms of biological role, the homodimer mediates transmembrane sugar transport down a concentration gradient. Transport is probably effected by rocking-type movements, where a cargo-binding cavity opens first on one and then on the other side of the membrane. The sequence is that of Sugar transporter SemiSWEET from Vibrio sp. (strain N418).